Consider the following 531-residue polypeptide: Beta-hexosaminidase subunit beta (531 aa).

The signal sequence occupies residues 1–21; that stretch reads MEVLPGLLRLLAALVVAERWA. A disulfide bridge connects residues C67 and C111. N-linked (GlcNAc...) asparagine glycans are attached at residues N120, N164, and N301. 2 disulfides stabilise this stretch: C283–C334 and C508–C525. The Proton donor role is filled by E329.

The protein belongs to the glycosyl hydrolase 20 family. In terms of assembly, there are 3 forms of beta-hexosaminidase: hexosaminidase A is a heterodimer composed of one subunit alpha and one subunit beta (chain A and B); hexosaminidase B is a homodimer of two beta subunits (two chains A and B); hexosaminidase S is a homodimer of two alpha subunits. The composition of the dimer (isozyme A versus isozyme S) has a significant effect on the substrate specificity of the alpha subunit active site.

It is found in the lysosome. The protein localises to the cytoplasmic vesicle. The protein resides in the secretory vesicle. It localises to the cortical granule. It catalyses the reaction Hydrolysis of terminal non-reducing N-acetyl-D-hexosamine residues in N-acetyl-beta-D-hexosaminides.. It carries out the reaction N-acetyl-beta-D-galactosaminyl-(1-&gt;4)-beta-D-3-sulfogalactosyl-(1-&gt;4)-beta-D-glucosyl-(1&lt;-&gt;1')-ceramide + H2O = a beta-D-3-sulfogalactosyl-(1-&gt;4)-beta-D-glucosyl-(1&lt;-&gt;1')-ceramide + N-acetyl-beta-D-galactosamine. The catalysed reaction is a ganglioside GM2 (d18:1(4E)) + H2O = a ganglioside GM3 (d18:1(4E)) + N-acetyl-beta-D-galactosamine. The enzyme catalyses a ganglioside GM2 + H2O = a ganglioside GM3 + N-acetyl-beta-D-galactosamine. It catalyses the reaction beta-D-GalNAc-(1-&gt;4)-alpha-L-IdoA-(1-&gt;3)-beta-D-GalNAc-4-sulfate-(1-&gt;4)-alpha-L-IdoA-(1-&gt;3)-D-GalNAc-4-sulfate + H2O = alpha-L-IdoA-(1-&gt;3)-beta-D-GalNAc-4-sulfate-(1-&gt;4)-alpha-L-IdoA-(1-&gt;3)-D-GalNAc-4-sulfate + N-acetyl-D-galactosamine. It carries out the reaction N-acetyl-beta-D-6-sulfogalactosaminyl-(1-&gt;4)-alpha-L-iduronyl-(1-&gt;3)-N-acetyl-D-6-sulfogalactosamine + H2O = alpha-L-iduronyl-(1-&gt;3)-N-acetyl-D-6-sulfogalactosamine + N-acetyl-D-6-sulfogalactosamine. Addition of GM2A stimulates the hydrolysis of sulfated glycosphingolipid SM2 and the ganglioside GM2. Its function is as follows. Hydrolyzes the non-reducing end N-acetyl-D-hexosamine and/or sulfated N-acetyl-D-hexosamine of glycoconjugates, such as the oligosaccharide moieties from proteins and neutral glycolipids, or from certain mucopolysaccharides. The isozyme B does not hydrolyze each of these substrates, however hydrolyzes efficiently neutral oligosaccharide. Only the isozyme A is responsible for the degradation of GM2 gangliosides in the presence of GM2A. During fertilization is responsible, at least in part, for the zona block to polyspermy. Present in the cortical granules of non-activated oocytes, is exocytosed during the cortical reaction in response to oocyte activation and inactivates the sperm galactosyltransferase-binding site, accounting for the block in sperm binding to the zona pellucida. The chain is Beta-hexosaminidase subunit beta from Sus scrofa (Pig).